A 298-amino-acid chain; its full sequence is FH protein interacting protein FIP2 (298 aa).

The region spanning S9–S80 is the BTB domain. 4 consecutive Pentapeptide repeat domains span residues E129–R165, T166–L203, A216–G255, and A256–G295.

Interacts with FH1. Expressed in all tissues but preferentially in roots and flowers.

Its pathway is protein modification; protein ubiquitination. Functionally, may act as a substrate-specific adapter of an E3 ubiquitin-protein ligase complex (CUL3-RBX1-BTB) which mediates the ubiquitination and subsequent proteasomal degradation of target proteins. This chain is FH protein interacting protein FIP2 (FIP2), found in Arabidopsis thaliana (Mouse-ear cress).